Reading from the N-terminus, the 232-residue chain is MIEDKRWGGVYSFEDSPYIMEILTELRDKDTDSIKFRKGLVKLGRYMGYEITKTMDVEKVKVETPLEETEGIIVKDRRNVVIITVLRAAIPFMEGLIKVFEHARVGIVSAARGKPPKFEIEMNYIKIPQITPEDTVIVADPMIATGSTLLRVLEEVKKYGTPKRTLVVGVLAAPEGITRIKEKFPEVEIFVAKIDRELNDKGYILPGLGDAGDRAFGEPVKITTLPQVHYIE.

38–42 provides a ligand contact to GTP; the sequence is KGLVK. 5-phospho-alpha-D-ribose 1-diphosphate is bound by residues Arg-87, Arg-112, and 140–148; that span reads DPMIATGST. Residues Ile-204 and 209 to 211 each bind uracil; that span reads GDA. Position 210 (Asp-210) interacts with 5-phospho-alpha-D-ribose 1-diphosphate.

It belongs to the UPRTase family. Requires Mg(2+) as cofactor.

The catalysed reaction is UMP + diphosphate = 5-phospho-alpha-D-ribose 1-diphosphate + uracil. It functions in the pathway pyrimidine metabolism; UMP biosynthesis via salvage pathway; UMP from uracil: step 1/1. With respect to regulation, allosterically activated by GTP. In terms of biological role, catalyzes the conversion of uracil and 5-phospho-alpha-D-ribose 1-diphosphate (PRPP) to UMP and diphosphate. This chain is Uracil phosphoribosyltransferase, found in Pyrococcus furiosus (strain ATCC 43587 / DSM 3638 / JCM 8422 / Vc1).